We begin with the raw amino-acid sequence, 256 residues long: Omega-amidase YafV (256 aa).

The region spanning 4-234 (LKITLLQQPL…ATRIDAELSM (231 aa)) is the CN hydrolase domain. E42 (proton acceptor) is an active-site residue. The Proton donor role is filled by K107. The active-site Nucleophile is C141.

Belongs to the carbon-nitrogen hydrolase superfamily. NIT1/NIT2 family.

It catalyses the reaction a monoamide of a dicarboxylate + H2O = a dicarboxylate + NH4(+). In terms of biological role, hydrolyzes alpha-ketoglutaramate (a-KGM) to alpha-ketoglutarate (alpha-KG) and ammonia, has weak activity on L-glutamine, almost no activity on deaminated glutathione (dGSH) and none on glutathione. May function as a metabolite repair enzyme. In Escherichia coli (strain K12), this protein is Omega-amidase YafV (yafV).